A 1399-amino-acid polypeptide reads, in one-letter code: FYVE, RhoGEF and PH domain-containing protein 6 (1399 aa).

6 disordered regions span residues 1 to 99 (MTSA…KDVR), 138 to 164 (MKENLENSKNGESSKRGSSWDSSSEKC), 185 to 210 (LTQQRSPCGSPGRHRAPKKPEMNGDH), 235 to 281 (AHHN…DGIS), 299 to 341 (YTSK…NGSS), and 367 to 479 (PVDE…KKPQ). A compositionally biased stretch (low complexity) spans 50–60 (PAIAPKPKVPT). The segment covering 259-276 (AESRGHTDSCEPENKRVA) has biased composition (basic and acidic residues). Positions 307–321 (KPRKTHAAARLRRQK) are enriched in basic residues. 2 stretches are compositionally biased toward polar residues: residues 332–341 (EPGNSNNGSS) and 377–402 (RALTGDSNSGGQDSVGSQKAVQQQTP). Positions 403-418 (SLDTDSSLTSDSSGSG) are enriched in low complexity. Over residues 428–453 (TYTQCSTQPLSLPKQVTSACTDQPPA) the composition is skewed to polar residues. 3 positions are modified to phosphoserine: Ser494, Ser531, and Ser583. Positions 515–542 (RNYLHHPGPPNHGASASPFDMPNPTSEK) are disordered. 2 disordered regions span residues 631–650 (QHGDVSAGHPLAREPKGLES) and 657–678 (TGEEKRSKPTKAHSAENCSLES). Phosphoserine occurs at positions 670 and 697. The tract at residues 768 to 840 (APDGQLQLDP…KQDEDAGMKS (73 aa)) is disordered. The segment covering 802–817 (PSDEEVINSSDEDDVS) has biased composition (acidic residues). The span at 821–838 (SKGEPDPLEDKQDEDAGM) shows a compositional bias: basic and acidic residues. Residues 841 to 1030 (KVHHIAKEIM…IEVANHANDT (190 aa)) enclose the DH domain. The PH 1 domain occupies 1059 to 1153 (VFLKEGTLMK…WLEAISSSIE (95 aa)). Ser1167 carries the post-translational modification Phosphoserine. The FYVE-type zinc-finger motif lies at 1191 to 1250 (DTRATMCMICTSEFTLTWRRHHCRACGKIVCQACSSNKYGLDYLKGQLARVCEHCFQELQ). 8 residues coordinate Zn(2+): Cys1197, Cys1200, Cys1213, Cys1216, Cys1221, Cys1224, Cys1242, and Cys1245. The PH 2 domain maps to 1302 to 1398 (DSTMSGYLYR…WIDAFQEGTV (97 aa)).

The protein localises to the cytoplasm. The protein resides in the cytoskeleton. May activate CDC42, a member of the Ras-like family of Rho- and Rac proteins, by exchanging bound GDP for free GTP. May play a role in regulating the actin cytoskeleton and cell shape. In Mus musculus (Mouse), this protein is FYVE, RhoGEF and PH domain-containing protein 6 (Fgd6).